The primary structure comprises 382 residues: uncharacterized protein (382 aa).

Transmembrane regions (helical) follow at residues 8 to 28 (VMLL…LNTL), 45 to 65 (MVSS…GYLI), 75 to 95 (YLAS…VGFW), 102 to 122 (FIAG…LMCS), 131 to 151 (LLAA…LLVS), 157 to 177 (LLHV…PLLF), 204 to 224 (LGVN…GLMP), 231 to 251 (GMAN…GILG), 274 to 294 (VVIL…ALFI), 325 to 345 (ALLL…AMLM), and 349 to 369 (SDNL…LMLL).

The protein belongs to the major facilitator superfamily. YcaD (TC 2.A.1.26) family.

Its subcellular location is the cell inner membrane. This is an uncharacterized protein from Salmonella gallinarum (strain 287/91 / NCTC 13346).